Consider the following 155-residue polypeptide: Small ribosomal subunit protein uS7 (155 aa).

This sequence belongs to the universal ribosomal protein uS7 family. Part of the 30S ribosomal subunit. Contacts proteins S9 and S11.

Functionally, one of the primary rRNA binding proteins, it binds directly to 16S rRNA where it nucleates assembly of the head domain of the 30S subunit. Is located at the subunit interface close to the decoding center, probably blocks exit of the E-site tRNA. This Chlorobium phaeobacteroides (strain DSM 266 / SMG 266 / 2430) protein is Small ribosomal subunit protein uS7.